The primary structure comprises 443 residues: Chromosomal replication initiator protein DnaA (443 aa).

Residues 1 to 76 form a domain I, interacts with DnaA modulators region; the sequence is METKALWEKL…KSVLNSYVSV (76 aa). The tract at residues 76 to 99 is domain II; that stretch reads VDFLTKEIFEKNTKKENKKEPINT. Residues 100–320 form a domain III, AAA+ region region; sequence VLSENALTFE…GLVNRLLFFG (221 aa). Positions 145, 147, 148, and 149 each coordinate ATP. The tract at residues 321 to 443 is domain IV, binds dsDNA; that stretch reads IQNDLGHIID…ESLKNEIIGK (123 aa).

This sequence belongs to the DnaA family. In terms of assembly, oligomerizes as a right-handed, spiral filament on DNA at oriC.

It localises to the cytoplasm. Its function is as follows. Plays an essential role in the initiation and regulation of chromosomal replication. ATP-DnaA binds to the origin of replication (oriC) to initiate formation of the DNA replication initiation complex once per cell cycle. Binds the DnaA box (a 9 base pair repeat at the origin) and separates the double-stranded (ds)DNA. Forms a right-handed helical filament on oriC DNA; dsDNA binds to the exterior of the filament while single-stranded (ss)DNA is stabiized in the filament's interior. The ATP-DnaA-oriC complex binds and stabilizes one strand of the AT-rich DNA unwinding element (DUE), permitting loading of DNA polymerase. After initiation quickly degrades to an ADP-DnaA complex that is not apt for DNA replication. Binds acidic phospholipids. The chain is Chromosomal replication initiator protein DnaA from Mesoplasma florum (strain ATCC 33453 / NBRC 100688 / NCTC 11704 / L1) (Acholeplasma florum).